A 154-amino-acid chain; its full sequence is 6,7-dimethyl-8-ribityllumazine synthase (154 aa).

5-amino-6-(D-ribitylamino)uracil is bound by residues Trp-22, 56–58, and 80–82; these read AWE and CVV. 85–86 is a binding site for (2S)-2-hydroxy-3-oxobutyl phosphate; sequence DT. His-88 functions as the Proton donor in the catalytic mechanism. Position 113 (Asn-113) interacts with 5-amino-6-(D-ribitylamino)uracil. Arg-127 is a (2S)-2-hydroxy-3-oxobutyl phosphate binding site.

The protein belongs to the DMRL synthase family. In terms of assembly, forms an icosahedral capsid composed of 60 subunits, arranged as a dodecamer of pentamers.

It carries out the reaction (2S)-2-hydroxy-3-oxobutyl phosphate + 5-amino-6-(D-ribitylamino)uracil = 6,7-dimethyl-8-(1-D-ribityl)lumazine + phosphate + 2 H2O + H(+). The protein operates within cofactor biosynthesis; riboflavin biosynthesis; riboflavin from 2-hydroxy-3-oxobutyl phosphate and 5-amino-6-(D-ribitylamino)uracil: step 1/2. In terms of biological role, catalyzes the formation of 6,7-dimethyl-8-ribityllumazine by condensation of 5-amino-6-(D-ribitylamino)uracil with 3,4-dihydroxy-2-butanone 4-phosphate. This is the penultimate step in the biosynthesis of riboflavin. The chain is 6,7-dimethyl-8-ribityllumazine synthase from Xylella fastidiosa (strain 9a5c).